The primary structure comprises 60 residues: Large ribosomal subunit protein uL30 (60 aa).

Belongs to the universal ribosomal protein uL30 family. As to quaternary structure, part of the 50S ribosomal subunit.

The polypeptide is Large ribosomal subunit protein uL30 (Leptothrix cholodnii (strain ATCC 51168 / LMG 8142 / SP-6) (Leptothrix discophora (strain SP-6))).